Reading from the N-terminus, the 435-residue chain is Eukaryotic peptide chain release factor subunit 1 (435 aa).

The protein belongs to the eukaryotic release factor 1 family. In terms of assembly, heterodimer of two subunits, one of which binds GTP.

The protein localises to the cytoplasm. In terms of biological role, directs the termination of nascent peptide synthesis (translation) in response to the termination codons UAA, UAG and UGA. This Podospora anserina (Pleurage anserina) protein is Eukaryotic peptide chain release factor subunit 1 (SU2).